The primary structure comprises 750 residues: Olfactomedin-like protein 2B (750 aa).

An N-terminal signal peptide occupies residues 1-22 (MAKPRLLVLYFALIVVPAWVSS). Coiled-coil stretches lie at residues 40 to 68 (AEDE…KVKA) and 179 to 213 (KLEE…GKEN). Asparagine 187 and asparagine 213 each carry an N-linked (GlcNAc...) asparagine glycan. 2 disordered regions span residues 346–437 (TRRP…PPAV) and 452–484 (VPPT…PEEE). Polar residues-rich tracts occupy residues 354-384 (QGHS…SDPS) and 393-413 (PTLQ…LQPS). Low complexity predominate over residues 416–430 (VPATTVAHTATQQPA). The region spanning 493-750 (RCKDTLSTIT…QVTYHVIFAY (258 aa)) is the Olfactomedin-like domain. Cysteine 494 and cysteine 680 form a disulfide bridge. N-linked (GlcNAc...) asparagine glycosylation is present at asparagine 695.

In terms of assembly, homodimer. Binds to heparin and chondroitin sulfate E. Post-translationally, O-glycosylated and N-glycosylated.

It localises to the secreted. This is Olfactomedin-like protein 2B (OLFML2B) from Homo sapiens (Human).